An 85-amino-acid polypeptide reads, in one-letter code: Cell division topological specificity factor (85 aa).

Belongs to the MinE family.

In terms of biological role, prevents the cell division inhibition by proteins MinC and MinD at internal division sites while permitting inhibition at polar sites. This ensures cell division at the proper site by restricting the formation of a division septum at the midpoint of the long axis of the cell. This is Cell division topological specificity factor from Chromobacterium violaceum (strain ATCC 12472 / DSM 30191 / JCM 1249 / CCUG 213 / NBRC 12614 / NCIMB 9131 / NCTC 9757 / MK).